We begin with the raw amino-acid sequence, 728 residues long: Ankyrin repeat protein A (728 aa).

ANK repeat units follow at residues 381–410, 429–458, 477–506, 525–554, and 573–602; these read INLP…ETGY, NGFS…KLAA, TSSH…LLIR, YGCP…SLAQ, and ARDT…TLFN.

This sequence belongs to the Toxin_15 family.

This is Ankyrin repeat protein A (arpA) from Escherichia coli (strain K12).